Reading from the N-terminus, the 763-residue chain is 5-methyltetrahydropteroyltriglutamate--homocysteine methyltransferase (763 aa).

Residues 16–19 (RELK) and K117 contribute to the 5-methyltetrahydropteroyltri-L-glutamate site. L-homocysteine contacts are provided by residues 440 to 442 (IGS) and E493. Residues 440–442 (IGS) and E493 contribute to the L-methionine site. 5-methyltetrahydropteroyltri-L-glutamate contacts are provided by residues 524–525 (RC) and W570. D608 contributes to the L-homocysteine binding site. D608 is an L-methionine binding site. Residue E614 participates in 5-methyltetrahydropteroyltri-L-glutamate binding. Positions 650, 652, and 674 each coordinate Zn(2+). Catalysis depends on H703, which acts as the Proton donor. C735 provides a ligand contact to Zn(2+).

Belongs to the vitamin-B12 independent methionine synthase family. Requires Zn(2+) as cofactor.

The catalysed reaction is 5-methyltetrahydropteroyltri-L-glutamate + L-homocysteine = tetrahydropteroyltri-L-glutamate + L-methionine. It functions in the pathway amino-acid biosynthesis; L-methionine biosynthesis via de novo pathway; L-methionine from L-homocysteine (MetE route): step 1/1. In terms of biological role, catalyzes the transfer of a methyl group from 5-methyltetrahydrofolate to homocysteine resulting in methionine formation. This is 5-methyltetrahydropteroyltriglutamate--homocysteine methyltransferase from Alcanivorax borkumensis (strain ATCC 700651 / DSM 11573 / NCIMB 13689 / SK2).